We begin with the raw amino-acid sequence, 194 residues long: GTP cyclohydrolase 1 (194 aa).

Residues Cys83, His86, and Cys155 each coordinate Zn(2+).

This sequence belongs to the GTP cyclohydrolase I family. Toroid-shaped homodecamer, composed of two pentamers of five dimers.

The catalysed reaction is GTP + H2O = 7,8-dihydroneopterin 3'-triphosphate + formate + H(+). Its pathway is cofactor biosynthesis; 7,8-dihydroneopterin triphosphate biosynthesis; 7,8-dihydroneopterin triphosphate from GTP: step 1/1. The polypeptide is GTP cyclohydrolase 1 (Streptococcus pyogenes serotype M3 (strain ATCC BAA-595 / MGAS315)).